The sequence spans 377 residues: Benzylmalonyl-CoA dehydrogenase (377 aa).

Residues 123–132 (ICMTEPNAGS), 156–158 (WIT), Arg266, Gln277, and 363–365 (TSE) each bind FAD.

The protein belongs to the acyl-CoA dehydrogenase family. In terms of assembly, homotetramer. FAD is required as a cofactor.

The catalysed reaction is (2-aminobenzyl)malonyl-CoA + O2 + H(+) = (E)-2-aminocinnamoyl-CoA + H2O2 + CO2. It carries out the reaction benzylmalonyl-CoA + O2 + H(+) = (E)-cinnamoyl-CoA + H2O2 + CO2. In terms of biological role, involved in degradation of indoleacetate, the most common member of the auxin class of plant hormones. Catalyzes the irreversible oxidative decarboxylation of (2-aminobenzyl)malonyl-CoA to 2-aminocinnamoyl-CoA and CO(2). In vitro, shows high catalytic efficiency with benzylmalonyl-CoA, a chemical analog of the physiological substrate, but otherwise accepts only a few medium-chain alkylmalonyl-CoA compounds as alternative substrates with low activities. The sequence is that of Benzylmalonyl-CoA dehydrogenase from Aromatoleum aromaticum (strain DSM 19018 / LMG 30748 / EbN1) (Azoarcus sp. (strain EbN1)).